A 56-amino-acid chain; its full sequence is Small ribosomal subunit protein uS14 (56 aa).

Residues Cys-21, Cys-24, Cys-39, and Cys-42 each contribute to the Zn(2+) site.

It belongs to the universal ribosomal protein uS14 family. In terms of assembly, component of the small ribosomal subunit. Mature ribosomes consist of a small (40S) and a large (60S) subunit. The 40S subunit contains about 32 different proteins and 1 molecule of RNA (18S). The 60S subunit contains 45 different proteins and 3 molecules of RNA (25S, 5.8S and 5S). Zn(2+) is required as a cofactor.

It localises to the cytoplasm. Its function is as follows. Component of the ribosome, a large ribonucleoprotein complex responsible for the synthesis of proteins in the cell. The small ribosomal subunit (SSU) binds messenger RNAs (mRNAs) and translates the encoded message by selecting cognate aminoacyl-transfer RNA (tRNA) molecules. The large subunit (LSU) contains the ribosomal catalytic site termed the peptidyl transferase center (PTC), which catalyzes the formation of peptide bonds, thereby polymerizing the amino acids delivered by tRNAs into a polypeptide chain. The nascent polypeptides leave the ribosome through a tunnel in the LSU and interact with protein factors that function in enzymatic processing, targeting, and the membrane insertion of nascent chains at the exit of the ribosomal tunnel. This is Small ribosomal subunit protein uS14 from Candida albicans (strain SC5314 / ATCC MYA-2876) (Yeast).